Here is a 335-residue protein sequence, read N- to C-terminus: Expansin-like protein 3 (335 aa).

Positions 1 to 20 are cleaved as a signal peptide; it reads MKFNTIFLVLSIVKFILISA. The Extracellular portion of the chain corresponds to 21–314; that stretch reads QSCPFSQSII…LNENENIESN (294 aa). Residues 43–143 enclose the Expansin-like EG45 domain; that stretch reads AGNCGFEKLN…VKVPCEVSGN (101 aa). 2 cysteine pairs are disulfide-bonded: Cys-46-Cys-76 and Cys-79-Cys-138. Asn-87 carries an N-linked (GlcNAc...) asparagine glycan. Residues 247–276 form a disordered region; the sequence is YKPQTFNSQQTSNNQNSNTQTPTKQPSPNS. Residues 249 to 272 are compositionally biased toward low complexity; sequence PQTFNSQQTSNNQNSNTQTPTKQP. Residues 315–335 form a helical membrane-spanning segment; the sequence is SLKLLPNFLLLILIILLNINF.

This sequence belongs to the expansin family. Expansin A subfamily.

The protein localises to the membrane. In terms of biological role, may serve to lubricate the movement of the cellulose microfibrils during cell growth and wall extension and/or may serve to maintain the fluid state of the slug cell wall. This chain is Expansin-like protein 3 (expl3), found in Dictyostelium discoideum (Social amoeba).